A 246-amino-acid chain; its full sequence is Ribonuclease 3 (246 aa).

Residues 20–145 form the RNase III domain; the sequence is FSKLEKILGF…FVGAIYLDRG (126 aa). A Mg(2+)-binding site is contributed by E62. D66 is an active-site residue. Residues N131 and E134 each coordinate Mg(2+). Residue E134 is part of the active site. In terms of domain architecture, DRBM spans 173–241; it reads SYKSLLIEWC…SKRGYFVFQS (69 aa).

The protein belongs to the ribonuclease III family. Homodimer. Mg(2+) serves as cofactor.

It is found in the cytoplasm. The catalysed reaction is Endonucleolytic cleavage to 5'-phosphomonoester.. In terms of biological role, digests double-stranded RNA. Involved in the processing of primary rRNA transcript to yield the immediate precursors to the large and small rRNAs (23S and 16S). Processes some mRNAs, and tRNAs when they are encoded in the rRNA operon. Processes pre-crRNA and tracrRNA of type II CRISPR loci if present in the organism. This chain is Ribonuclease 3, found in Flavobacterium psychrophilum (strain ATCC 49511 / DSM 21280 / CIP 103535 / JIP02/86).